Here is a 165-residue protein sequence, read N- to C-terminus: ATP synthase subunit b (165 aa).

A helical membrane pass occupies residues 11 to 31 (LIFWTIVNFLLLVFLLGKFAW).

The protein belongs to the ATPase B chain family. In terms of assembly, F-type ATPases have 2 components, F(1) - the catalytic core - and F(0) - the membrane proton channel. F(1) has five subunits: alpha(3), beta(3), gamma(1), delta(1), epsilon(1). F(0) has three main subunits: a(1), b(2) and c(10-14). The alpha and beta chains form an alternating ring which encloses part of the gamma chain. F(1) is attached to F(0) by a central stalk formed by the gamma and epsilon chains, while a peripheral stalk is formed by the delta and b chains.

The protein resides in the cell membrane. In terms of biological role, f(1)F(0) ATP synthase produces ATP from ADP in the presence of a proton or sodium gradient. F-type ATPases consist of two structural domains, F(1) containing the extramembraneous catalytic core and F(0) containing the membrane proton channel, linked together by a central stalk and a peripheral stalk. During catalysis, ATP synthesis in the catalytic domain of F(1) is coupled via a rotary mechanism of the central stalk subunits to proton translocation. Its function is as follows. Component of the F(0) channel, it forms part of the peripheral stalk, linking F(1) to F(0). The polypeptide is ATP synthase subunit b (Elusimicrobium minutum (strain Pei191)).